The following is a 479-amino-acid chain: MSATALQVKTTQKPNSRLAVEVAVPAERCQANYEAAVTRLSRTTNLPGFRKGKVPRAVLLQQIGPVRIRATALESLVDAVWREVLEQESIEPLCEPELSGGFDALLESFQPSEALTLTLETDVTPTPKLKATKGLQAEAEVVTFDPSKVDELIEQSRKQLATLVPVESRPAAIGDIAVVSFSGTYDDDGSAIEGGSSDSMDVDLEDGQMIPGFVEGIIGMNLGDEKTVDCHFPDDYSKEDARGRKASFVINLKELKTRELPDLDDAFAQQSSDKATLEELRNDLEQRLQEDAKRRDRSNRHDALLEALTEQLEVDLPNTLVQQEIRNLVEQTASQFAQQGMDVKSMFTPELVRSLMESSRPEAEERLRRSFALTALAESEDLKIEESEISAKVKEVSRELSGERDIDPARLRQAVSDDLLKDKLLDWLEDNSTITEKVLESEAKTSKPAAKSKGSKTKSTKTKTNKANTEKPASDKSKS.

The 88-residue stretch at 174–261 (GDIAVVSFSG…LKELKTRELP (88 aa)) folds into the PPIase FKBP-type domain. Residues 438 to 479 (VLESEAKTSKPAAKSKGSKTKSTKTKTNKANTEKPASDKSKS) are disordered. The span at 453–464 (KGSKTKSTKTKT) shows a compositional bias: basic residues. Positions 468–479 (NTEKPASDKSKS) are enriched in basic and acidic residues.

The protein belongs to the FKBP-type PPIase family. Tig subfamily.

The protein localises to the cytoplasm. It catalyses the reaction [protein]-peptidylproline (omega=180) = [protein]-peptidylproline (omega=0). Its function is as follows. Involved in protein export. Acts as a chaperone by maintaining the newly synthesized protein in an open conformation. Functions as a peptidyl-prolyl cis-trans isomerase. This is Trigger factor from Prochlorococcus marinus (strain MIT 9313).